The chain runs to 944 residues: Valine--tRNA ligase (944 aa).

The short motif at 43–53 (PNVTGTLHMGH) is the 'HIGH' region element. Residues 550 to 554 (KMSKS) carry the 'KMSKS' region motif. An ATP-binding site is contributed by K553. Positions 878–944 (LVDMDAERTR…TGLREQRAKL (67 aa)) form a coiled coil.

It belongs to the class-I aminoacyl-tRNA synthetase family. ValS type 1 subfamily. Monomer.

It localises to the cytoplasm. It carries out the reaction tRNA(Val) + L-valine + ATP = L-valyl-tRNA(Val) + AMP + diphosphate. Functionally, catalyzes the attachment of valine to tRNA(Val). As ValRS can inadvertently accommodate and process structurally similar amino acids such as threonine, to avoid such errors, it has a 'posttransfer' editing activity that hydrolyzes mischarged Thr-tRNA(Val) in a tRNA-dependent manner. This chain is Valine--tRNA ligase, found in Xanthomonas campestris pv. campestris (strain 8004).